A 424-amino-acid polypeptide reads, in one-letter code: UDP-N-acetylglucosamine 1-carboxyvinyltransferase (424 aa).

22-23 lines the phosphoenolpyruvate pocket; it reads KN. R93 is a UDP-N-acetyl-alpha-D-glucosamine binding site. The Proton donor role is filled by C117. C117 bears the 2-(S-cysteinyl)pyruvic acid O-phosphothioketal mark. Residues 122-126, 162-165, D307, and I329 contribute to the UDP-N-acetyl-alpha-D-glucosamine site; these read RPVDL and KVSV.

It belongs to the EPSP synthase family. MurA subfamily.

The protein resides in the cytoplasm. It carries out the reaction phosphoenolpyruvate + UDP-N-acetyl-alpha-D-glucosamine = UDP-N-acetyl-3-O-(1-carboxyvinyl)-alpha-D-glucosamine + phosphate. It functions in the pathway cell wall biogenesis; peptidoglycan biosynthesis. In terms of biological role, cell wall formation. Adds enolpyruvyl to UDP-N-acetylglucosamine. In Haemophilus influenzae (strain PittEE), this protein is UDP-N-acetylglucosamine 1-carboxyvinyltransferase.